Reading from the N-terminus, the 168-residue chain is Large ribosomal subunit protein uL10 (168 aa).

The protein belongs to the universal ribosomal protein uL10 family. In terms of assembly, part of the ribosomal stalk of the 50S ribosomal subunit. The N-terminus interacts with L11 and the large rRNA to form the base of the stalk. The C-terminus forms an elongated spine to which L12 dimers bind in a sequential fashion forming a multimeric L10(L12)X complex.

Its function is as follows. Forms part of the ribosomal stalk, playing a central role in the interaction of the ribosome with GTP-bound translation factors. In Lacticaseibacillus casei (strain BL23) (Lactobacillus casei), this protein is Large ribosomal subunit protein uL10.